Consider the following 910-residue polypeptide: Protein translocase subunit SecA (910 aa).

Residues Gln86, 104-108, and Asp508 contribute to the ATP site; that span reads GEGKT. Cys894, Cys896, Cys905, and Cys906 together coordinate Zn(2+).

It belongs to the SecA family. Monomer and homodimer. Part of the essential Sec protein translocation apparatus which comprises SecA, SecYEG and auxiliary proteins SecDF. Other proteins may also be involved. Zn(2+) is required as a cofactor.

It is found in the cell membrane. Its subcellular location is the cytoplasm. The catalysed reaction is ATP + H2O + cellular proteinSide 1 = ADP + phosphate + cellular proteinSide 2.. Functionally, part of the Sec protein translocase complex. Interacts with the SecYEG preprotein conducting channel. Has a central role in coupling the hydrolysis of ATP to the transfer of proteins into and across the cell membrane, serving as an ATP-driven molecular motor driving the stepwise translocation of polypeptide chains across the membrane. The protein is Protein translocase subunit SecA of Acetivibrio thermocellus (strain ATCC 27405 / DSM 1237 / JCM 9322 / NBRC 103400 / NCIMB 10682 / NRRL B-4536 / VPI 7372) (Clostridium thermocellum).